A 230-amino-acid chain; its full sequence is 5'-methylthioadenosine/S-adenosylhomocysteine nucleosidase (230 aa).

Glutamate 12 functions as the Proton acceptor in the catalytic mechanism. Residues glycine 78, isoleucine 153, and 174–175 contribute to the substrate site; that span reads ME. Aspartate 198 acts as the Proton donor in catalysis.

The protein belongs to the PNP/UDP phosphorylase family. MtnN subfamily.

The catalysed reaction is S-adenosyl-L-homocysteine + H2O = S-(5-deoxy-D-ribos-5-yl)-L-homocysteine + adenine. The enzyme catalyses S-methyl-5'-thioadenosine + H2O = 5-(methylsulfanyl)-D-ribose + adenine. It catalyses the reaction 5'-deoxyadenosine + H2O = 5-deoxy-D-ribose + adenine. It participates in amino-acid biosynthesis; L-methionine biosynthesis via salvage pathway; S-methyl-5-thio-alpha-D-ribose 1-phosphate from S-methyl-5'-thioadenosine (hydrolase route): step 1/2. In terms of biological role, catalyzes the irreversible cleavage of the glycosidic bond in both 5'-methylthioadenosine (MTA) and S-adenosylhomocysteine (SAH/AdoHcy) to adenine and the corresponding thioribose, 5'-methylthioribose and S-ribosylhomocysteine, respectively. Also cleaves 5'-deoxyadenosine, a toxic by-product of radical S-adenosylmethionine (SAM) enzymes, into 5-deoxyribose and adenine. The polypeptide is 5'-methylthioadenosine/S-adenosylhomocysteine nucleosidase (Shewanella frigidimarina (strain NCIMB 400)).